The chain runs to 449 residues: tRNA-2-methylthio-N(6)-dimethylallyladenosine synthase (449 aa).

Residues 3–118 (KKVFVKTFGC…LPELLAQREA (116 aa)) enclose the MTTase N-terminal domain. [4Fe-4S] cluster-binding residues include C12, C49, C81, C155, C159, and C162. In terms of domain architecture, Radical SAM core spans 141–376 (RVEGASAFVS…VINANIKSIS (236 aa)). The 64-residue stretch at 377–440 (ESRVGTVQRI…AYTLRGEVVT (64 aa)) folds into the TRAM domain.

The protein belongs to the methylthiotransferase family. MiaB subfamily. In terms of assembly, monomer. It depends on [4Fe-4S] cluster as a cofactor.

It localises to the cytoplasm. The catalysed reaction is N(6)-dimethylallyladenosine(37) in tRNA + (sulfur carrier)-SH + AH2 + 2 S-adenosyl-L-methionine = 2-methylsulfanyl-N(6)-dimethylallyladenosine(37) in tRNA + (sulfur carrier)-H + 5'-deoxyadenosine + L-methionine + A + S-adenosyl-L-homocysteine + 2 H(+). Catalyzes the methylthiolation of N6-(dimethylallyl)adenosine (i(6)A), leading to the formation of 2-methylthio-N6-(dimethylallyl)adenosine (ms(2)i(6)A) at position 37 in tRNAs that read codons beginning with uridine. The chain is tRNA-2-methylthio-N(6)-dimethylallyladenosine synthase from Paracidovorax citrulli (strain AAC00-1) (Acidovorax citrulli).